We begin with the raw amino-acid sequence, 283 residues long: Bis(5'-nucleosyl)-tetraphosphatase, symmetrical (283 aa).

Belongs to the Ap4A hydrolase family.

The enzyme catalyses P(1),P(4)-bis(5'-adenosyl) tetraphosphate + H2O = 2 ADP + 2 H(+). Hydrolyzes diadenosine 5',5'''-P1,P4-tetraphosphate to yield ADP. The chain is Bis(5'-nucleosyl)-tetraphosphatase, symmetrical from Pseudomonas paraeruginosa (strain DSM 24068 / PA7) (Pseudomonas aeruginosa (strain PA7)).